A 1274-amino-acid polypeptide reads, in one-letter code: Regulator of telomere elongation helicase 1 (1274 aa).

Positions 7–296 (NGVTVDFPFQ…ARVAQHGELQ (290 aa)) constitute a Helicase ATP-binding domain. An ATP-binding site is contributed by 42 to 49 (SPTGTGKT). Residues cysteine 145, cysteine 163, cysteine 172, and cysteine 207 each contribute to the [4Fe-4S] cluster site. The Nuclear localization signal signature appears at 151 to 167 (KKQESNHMQISLCRKKV). Residues 250–253 (DEAH) carry the DEAH box motif. Positions 871–877 (QRGGKKK) match the Nuclear localization signal motif. Disordered stretches follow at residues 982 to 1002 (NSLPFGEQAQSTASKQGRREL), 1014 to 1038 (RQLDPGEHLNQGWPHLSTHLTSKGD), and 1143 to 1198 (ELPC…DDTI). Over residues 1186 to 1196 (QRPDQSARSDD) the composition is skewed to basic and acidic residues.

Belongs to the helicase family. RAD3/XPD subfamily. As to quaternary structure, interacts with TERF1. Interacts (via PIP-box) with PCNA; the interaction is direct and essential for suppressing telomere fragility. Interacts with MMS19; the interaction mediates the association of RTEL1 with the cytosolic iron-sulfur protein assembly (CIA) complex.

The protein localises to the nucleus. The catalysed reaction is ATP + H2O = ADP + phosphate + H(+). In terms of biological role, a probable ATP-dependent DNA helicase implicated in telomere-length regulation, DNA repair and the maintenance of genomic stability. Acts as an anti-recombinase to counteract toxic recombination and limit crossover during meiosis. Regulates meiotic recombination and crossover homeostasis by physically dissociating strand invasion events and thereby promotes noncrossover repair by meiotic synthesis dependent strand annealing (SDSA) as well as disassembly of D loop recombination intermediates. Also disassembles T loops and prevents telomere fragility by counteracting telomeric G4-DNA structures, which together ensure the dynamics and stability of the telomere. This is Regulator of telomere elongation helicase 1 (Rtel1) from Rattus norvegicus (Rat).